The primary structure comprises 94 residues: PqqA binding protein (94 aa).

Belongs to the PqqD family. In terms of assembly, monomer. Interacts with PqqE.

Its pathway is cofactor biosynthesis; pyrroloquinoline quinone biosynthesis. Functions as a PqqA binding protein and presents PqqA to PqqE, in the pyrroloquinoline quinone (PQQ) biosynthetic pathway. This is PqqA binding protein from Pseudomonas savastanoi pv. phaseolicola (strain 1448A / Race 6) (Pseudomonas syringae pv. phaseolicola (strain 1448A / Race 6)).